The sequence spans 58 residues: Keratin-associated protein 19-6 (58 aa).

Belongs to the KRTAP type 19 family. Interacts with hair keratins.

Functionally, in the hair cortex, hair keratin intermediate filaments are embedded in an interfilamentous matrix, consisting of hair keratin-associated proteins (KRTAP), which are essential for the formation of a rigid and resistant hair shaft through their extensive disulfide bond cross-linking with abundant cysteine residues of hair keratins. The matrix proteins include the high-sulfur and high-glycine-tyrosine keratins. This Homo sapiens (Human) protein is Keratin-associated protein 19-6 (KRTAP19-6).